The sequence spans 147 residues: MHSWVQRLLTTATTAALLLLAACCAASALDAFHVPSVQAQAHVTKINRFHKQLNGNDKVFVFLTAEYENSKNSLNQVSLWDHIIPDKDKANLQVEVKSKYPLIDQGSSLRGKKVQLVLHWHVMPKAGVMIRDRMALSEFNLPDSYTS.

Residues 1 to 6 (MHSWVQ) lie on the Cytoplasmic side of the membrane. The chain crosses the membrane as a helical; Signal-anchor for type II membrane protein span at residues 7 to 29 (RLLTTATTAALLLLAACCAASAL). Residues 30-147 (DAFHVPSVQA…EFNLPDSYTS (118 aa)) are Lumenal-facing.

The protein belongs to the SPCS3 family. As to quaternary structure, component of the signal peptidase complex (SPC) composed of a catalytic subunit SEC11 and three accessory subunits SPCS1, SPCS2 and SPCS3. The complex induces a local thinning of the ER membrane which is used to measure the length of the signal peptide (SP) h-region of protein substrates. This ensures the selectivity of the complex towards h-regions shorter than 18-20 amino acids.

The protein resides in the endoplasmic reticulum membrane. Functionally, essential component of the signal peptidase complex (SPC) which catalyzes the cleavage of N-terminal signal sequences from nascent proteins as they are translocated into the lumen of the endoplasmic reticulum. Essential for the SPC catalytic activity, possibly by stabilizing and positioning the active center of the complex close to the lumenal surface. This is Signal peptidase complex subunit 3 from Oryza sativa subsp. japonica (Rice).